The chain runs to 514 residues: ATP synthase subunit alpha (514 aa).

Position 170–177 (G170–T177) interacts with ATP.

It belongs to the ATPase alpha/beta chains family. In terms of assembly, F-type ATPases have 2 components, CF(1) - the catalytic core - and CF(0) - the membrane proton channel. CF(1) has five subunits: alpha(3), beta(3), gamma(1), delta(1), epsilon(1). CF(0) has three main subunits: a(1), b(2) and c(9-12). The alpha and beta chains form an alternating ring which encloses part of the gamma chain. CF(1) is attached to CF(0) by a central stalk formed by the gamma and epsilon chains, while a peripheral stalk is formed by the delta and b chains.

The protein resides in the cell inner membrane. The catalysed reaction is ATP + H2O + 4 H(+)(in) = ADP + phosphate + 5 H(+)(out). Its function is as follows. Produces ATP from ADP in the presence of a proton gradient across the membrane. The alpha chain is a regulatory subunit. This Marinobacter nauticus (strain ATCC 700491 / DSM 11845 / VT8) (Marinobacter aquaeolei) protein is ATP synthase subunit alpha.